The primary structure comprises 770 residues: Shutoff protein (770 aa).

Disordered stretches follow at residues 1–20 (MEEDLKLQPDSETLTTPNSE) and 30–49 (EEENEQVEQDPGYVTPPEDG). The span at 10 to 19 (DSETLTTPNS) shows a compositional bias: polar residues. The interval 248-312 (VMDQVLIKRA…AVLVTVELEC (65 aa)) is binding to host EIF4G. The region spanning 315 to 433 (RFFANPQTLR…ELWTSFDERT (119 aa)) is the RRM domain. 2 positions are modified to phosphotyrosine; by host: Tyr332 and Tyr647. Positions 661–770 (LSAAASCRSQ…TATMFTESQP (110 aa)) are disordered. Positions 726 to 739 (GGPRGRGGRNHRQR) are enriched in basic residues. Polar residues predominate over residues 742-755 (TIFQKTRSEPTSEN).

It belongs to the adenoviridae shutoff protein family. In terms of assembly, monomer. Interacts with hexon protein; this interaction allows chaperoning and trimerization of hexon proteins. Interacts (via N-terminus) with host initiation factor EIF4G (via C-terminus). Interacts (via RRM domain) with viral mRNAs that contain the tripartite leader; this interaction allows ribosome shunting and expression of viral late mRNAs. Post-translationally, might be cleaved by the viral protease. In terms of processing, phosphorylated. Tyrosine phosphorylation enhances preferential binding to tripartite leader mRNAs and allows ribosome shunting. Methylated. Asymmetric dimethylation by host PRMT1 of the Arg/Gly-rich region may regulate shutoff protein binding to hexon and promote the capsid assembly in the nucleus.

The protein localises to the host cytoplasm. Its function is as follows. Protein that inhibits host translation while promoting late viral translation by ribosome shunting. Blocks host cap-dependent translation by binding to eIF4G, displacing MKNK1 from cap initiation complexes and preventing EIF4E phosphorylation. Binds to the tripartite leader sequence of viral late mRNAs and recruits host eIF4G, PABPC1/poly-A binding protein and 40S ribosomes subunits on viral mRNAs, allowing ribosome shunting and efficient translation of late viral mRNAs even though conventional translation via ribosome scanning from the cap has been shut off in the host cell. During assembly, acts as a chaperone protein that helps hexon proteins assembly into trimers. The protein is Shutoff protein of Human adenovirus F serotype 40 (HAdV-40).